Reading from the N-terminus, the 357-residue chain is Aminomethyltransferase (357 aa).

Belongs to the GcvT family. As to quaternary structure, the glycine cleavage system is composed of four proteins: P, T, L and H.

The enzyme catalyses N(6)-[(R)-S(8)-aminomethyldihydrolipoyl]-L-lysyl-[protein] + (6S)-5,6,7,8-tetrahydrofolate = N(6)-[(R)-dihydrolipoyl]-L-lysyl-[protein] + (6R)-5,10-methylene-5,6,7,8-tetrahydrofolate + NH4(+). Its function is as follows. The glycine cleavage system catalyzes the degradation of glycine. This Halothermothrix orenii (strain H 168 / OCM 544 / DSM 9562) protein is Aminomethyltransferase.